A 549-amino-acid chain; its full sequence is Cation/acetate symporter ActP (549 aa).

13 consecutive transmembrane segments (helical) span residues 33–53 (WQAI…TYWA), 77–97 (LAIA…ALVF), 103–123 (GLIY…LIAE), 148–168 (ILSA…QMVG), 183–203 (IAVV…GMLA), 206–226 (WVQI…AFMV), 262–282 (ISAL…PHIL), 303–323 (GFMG…IMLV), 355–375 (LFLG…VAGL), 404–424 (VSKI…VLFE), 428–448 (IAFM…PIIL), 464–484 (GGWL…TIWV), and 493–513 (IFPY…GIWF).

Belongs to the sodium:solute symporter (SSF) (TC 2.A.21) family.

The protein resides in the cell inner membrane. Transports acetate. In Escherichia coli O17:K52:H18 (strain UMN026 / ExPEC), this protein is Cation/acetate symporter ActP.